The following is a 143-amino-acid chain: Transcriptional regulator MraZ (143 aa).

SpoVT-AbrB domains follow at residues 5-47 (THSP…PIRE) and 76-119 (ASNE…DAQT).

This sequence belongs to the MraZ family. Forms oligomers.

It localises to the cytoplasm. The protein resides in the nucleoid. The chain is Transcriptional regulator MraZ from Thermobifida fusca (strain YX).